The following is a 282-amino-acid chain: Putative 4-diphosphocytidyl-2-C-methyl-D-erythritol kinase (282 aa).

Lys9 is an active-site residue. 93–103 (PVSAGLAGGSA) is a binding site for ATP. The active site involves Asp135.

It belongs to the GHMP kinase family. IspE subfamily.

The catalysed reaction is 4-CDP-2-C-methyl-D-erythritol + ATP = 4-CDP-2-C-methyl-D-erythritol 2-phosphate + ADP + H(+). Functionally, catalyzes the phosphorylation of the position 2 hydroxy group of 4-diphosphocytidyl-2C-methyl-D-erythritol. The sequence is that of Putative 4-diphosphocytidyl-2-C-methyl-D-erythritol kinase from Staphylococcus aureus (strain MRSA252).